The sequence spans 812 residues: Probable inorganic carbon transporter subunit DabA (812 aa).

4 residues coordinate Zn(2+): Cys339, Asp341, His501, and Cys516.

It belongs to the inorganic carbon transporter (TC 9.A.2) DabA family. Forms a complex with DabB. Zn(2+) is required as a cofactor.

The protein localises to the cell inner membrane. Functionally, part of an energy-coupled inorganic carbon pump. This is Probable inorganic carbon transporter subunit DabA from Xanthomonas axonopodis pv. citri (strain 306).